The following is a 525-amino-acid chain: uncharacterized protein (525 aa).

A signal peptide spans 1–21 (MLECLSALLVLFAGGGGSVLA). Residues 22-448 (AVQSKTVADP…ISAASQLDKR (427 aa)) are Extracellular-facing. The interval 242 to 264 (KVSSENCSKDTDDKSGSKKERNT) is disordered. Residues 449–469 (IFIFTAITVSITTLMMLGFSY) traverse the membrane as a helical segment. Over 470–525 (RSRVSFRDHSIDDSDDDNDWSDDEVEFDEEYFYSLPVSIPEKGISLDKMAQQLGVE) the chain is Cytoplasmic.

Its subcellular location is the membrane. This is an uncharacterized protein from Saccharomyces cerevisiae (strain YJM789) (Baker's yeast).